A 460-amino-acid polypeptide reads, in one-letter code: Tyrosine phenol-lyase (460 aa).

Position 260 is an N6-(pyridoxal phosphate)lysine (Lys-260).

It belongs to the beta-eliminating lyase family. As to quaternary structure, homotetramer. It depends on pyridoxal 5'-phosphate as a cofactor.

It carries out the reaction L-tyrosine + H2O = phenol + pyruvate + NH4(+). The chain is Tyrosine phenol-lyase from Clostridium tetani (strain Massachusetts / E88).